Consider the following 179-residue polypeptide: Large ribosomal subunit protein uL5 (179 aa).

Belongs to the universal ribosomal protein uL5 family. In terms of assembly, part of the 50S ribosomal subunit; part of the 5S rRNA/L5/L18/L25 subcomplex. Contacts the 5S rRNA and the P site tRNA. Forms a bridge to the 30S subunit in the 70S ribosome.

This is one of the proteins that bind and probably mediate the attachment of the 5S RNA into the large ribosomal subunit, where it forms part of the central protuberance. In the 70S ribosome it contacts protein S13 of the 30S subunit (bridge B1b), connecting the 2 subunits; this bridge is implicated in subunit movement. Contacts the P site tRNA; the 5S rRNA and some of its associated proteins might help stabilize positioning of ribosome-bound tRNAs. The chain is Large ribosomal subunit protein uL5 from Nitrosomonas europaea (strain ATCC 19718 / CIP 103999 / KCTC 2705 / NBRC 14298).